A 403-amino-acid polypeptide reads, in one-letter code: Large ribosomal subunit protein uL3 (403 aa).

The interval 1 to 37 (MSHRKFSAPRHGSLGFLPRKRSSRHRGKVKSFPKDDP) is disordered. Ser-13 carries the post-translational modification Phosphoserine. Over residues 18-31 (PRKRSSRHRGKVKS) the composition is skewed to basic residues. Residue Lys-39 forms a Glycyl lysine isopeptide (Lys-Gly) (interchain with G-Cter in SUMO2) linkage. Lys-136 is modified (N6-acetyllysine). Residues Lys-224 and Lys-226 each participate in a glycyl lysine isopeptide (Lys-Gly) (interchain with G-Cter in SUMO2) cross-link. His-245 bears the Tele-methylhistidine mark. Lys-286 and Lys-294 each carry N6-acetyllysine; alternate. Lys-286 participates in a covalent cross-link: Glycyl lysine isopeptide (Lys-Gly) (interchain with G-Cter in SUMO2); alternate. Lys-294 is covalently cross-linked (Glycyl lysine isopeptide (Lys-Gly) (interchain with G-Cter in SUMO1); alternate). Ser-304 is subject to Phosphoserine. Lys-366 bears the N6-acetyllysine; alternate mark. A Glycyl lysine isopeptide (Lys-Gly) (interchain with G-Cter in SUMO2); alternate cross-link involves residue Lys-366. Lys-373 carries the post-translational modification N6-acetyllysine. Glycyl lysine isopeptide (Lys-Gly) (interchain with G-Cter in SUMO2) cross-links involve residues Lys-386, Lys-393, and Lys-399.

Belongs to the universal ribosomal protein uL3 family. In terms of assembly, component of the large ribosomal subunit. Interacts with DHX33. Post-translationally, constitutively monomethylated at His-245 by METTL18. Methylation at His-245 regulates translation elongation by slowing ribosome traversal on tyrosine codons: slower elongation provides enough time for proper folding of synthesized proteins and prevents cellular aggregation of tyrosine-rich proteins. It is not required for incorporation of RPL3 into ribosomes.

Its subcellular location is the nucleus. It is found in the nucleolus. The protein localises to the cytoplasm. Component of the large ribosomal subunit. The ribosome is a large ribonucleoprotein complex responsible for the synthesis of proteins in the cell. In Homo sapiens (Human), this protein is Large ribosomal subunit protein uL3 (RPL3).